The following is a 476-amino-acid chain: MSYEERVNAHPNLGDESDVEEEALVNDYREQVNFDDGMSELDRTTSLGTGSQTQDLQAQLAAAATPLEYQATLETKFASYDNYCSLFHYILNSEGPVELEVPSYYWAWDVIDEFIYQFESFCRYRNRVARSGSNEEEAQLLRENPNTWGCYSVLNVLYSLIQKSQINEQLAAIKRGEDPLAFAGEYGSRPLYKMLGYFSIIGLLRVHCLLGDFSLALKTLDDIEMNKKAMFARVMAAHFTTYYYVGFSYMMMRRYGDAIRMFSHILVYVSRTKNFQKGGNSYDAIAKKNDQMYALIAICVALHPTRLDDTIHSALREKYGEQLLRLQHGGPDALPLFEELFRSACPKFISPTPPDFDNPALNIDPVDHHTAIFMDEVKNTLYNPTIRSYLKLYTTMDLKKLAGFLEVQPEVLRSWLLVNKQRSRQVRWVEGGLLEGEVVSANDLDYALENDLIHVSETKAGRRLVDWYLRNLARVY.

The 196-residue stretch at 257-452 folds into the PCI domain; the sequence is DAIRMFSHIL…DLDYALENDL (196 aa).

It belongs to the eIF-3 subunit L family. As to quaternary structure, component of the eukaryotic translation initiation factor 3 (eIF-3) complex.

Its subcellular location is the cytoplasm. In terms of biological role, component of the eukaryotic translation initiation factor 3 (eIF-3) complex, which is involved in protein synthesis of a specialized repertoire of mRNAs and, together with other initiation factors, stimulates binding of mRNA and methionyl-tRNAi to the 40S ribosome. The eIF-3 complex specifically targets and initiates translation of a subset of mRNAs involved in cell proliferation. The sequence is that of Eukaryotic translation initiation factor 3 subunit L from Aspergillus fumigatus (strain CBS 144.89 / FGSC A1163 / CEA10) (Neosartorya fumigata).